The sequence spans 619 residues: Laccase (619 aa).

The N-terminal stretch at 1–21 (MKFLGIAALVAGLLAPSLVLG) is a signal peptide. The propeptide occupies 22 to 49 (APAPGTEGVNLLTPVDKRQDSQAERYGG). Residues cysteine 55 and cysteine 63 are joined by a disulfide bond. Plastocyanin-like domains lie at 84 to 207 (TRRY…IVIN) and 216 to 373 (VDLG…LPTN). Asparagine 139 carries an N-linked (GlcNAc...) asparagine glycan. Residues histidine 144, histidine 146, histidine 189, and histidine 191 each contribute to the Cu cation site. Intrachain disulfides connect cysteine 165–cysteine 586 and cysteine 349–cysteine 383. Asparagine 282, asparagine 295, and asparagine 340 each carry an N-linked (GlcNAc...) asparagine glycan. Asparagine 422 and asparagine 444 each carry an N-linked (GlcNAc...) asparagine glycan. The Plastocyanin-like 3 domain maps to 431–566 (NKPVLEYVLT…GGLSNQFLER (136 aa)). The Cu cation site is built by histidine 477, histidine 480, histidine 482, histidine 548, cysteine 549, histidine 550, and histidine 554. Residues 607-619 (RSGVKAREVKMKW) constitute a propeptide that is removed on maturation.

The protein belongs to the multicopper oxidase family. Cu cation serves as cofactor.

The protein resides in the secreted. It catalyses the reaction 4 hydroquinone + O2 = 4 benzosemiquinone + 2 H2O. In terms of biological role, lignin degradation and detoxification of lignin-derived products. The protein is Laccase (lacc) of Neurospora crassa (strain ATCC 24698 / 74-OR23-1A / CBS 708.71 / DSM 1257 / FGSC 987).